The sequence spans 352 residues: Ion-translocating oxidoreductase complex subunit D (352 aa).

Transmembrane regions (helical) follow at residues 20–40, 42–62, 69–91, and 123–143; these read IMLL…WFFG, GTLF…AIVL, VASH…SIPP, and PAMI…TSWL. At T187 the chain carries FMN phosphoryl threonine. 5 consecutive transmembrane segments (helical) span residues 215–235, 242–262, 267–287, 301–321, and 322–342; these read LAGV…VFLL, WHIP…GWLF, LASP…FFIL, LIFG…GGYP, and DGVA…DYYT.

It belongs to the NqrB/RnfD family. As to quaternary structure, the complex is composed of six subunits: RsxA, RsxB, RsxC, RsxD, RsxE and RsxG. The cofactor is FMN.

It localises to the cell inner membrane. Part of a membrane-bound complex that couples electron transfer with translocation of ions across the membrane. Required to maintain the reduced state of SoxR. This Salmonella paratyphi A (strain ATCC 9150 / SARB42) protein is Ion-translocating oxidoreductase complex subunit D.